Consider the following 927-residue polypeptide: MGTQDPGNMGTGVPASEQISCAKEDPQVYCPEETGGTKDVQVTDCKSPEDSRPPKETDCCNPEDSGQLMVSYEGKAMGYQVPPFGWRICLAHEFTEKRKPFQANNVSLSNMIKHIGMGLRYLQWWYRKTHVEKKTPFIDMINSVPLRQIYGCPLGGIGGGTITRGWRGQFCRWQLNPGMYQHRTVIADQFTVCLRREGQTVYQQVLSLERPSVLRSWNWGLCGYFAFYHALYPRAWTVYQLPGQNVTLTCRQITPILPHDYQDSSLPVGVFVWDVENEGDEALDVSIMFSMRNGLGGGDDAPGGLWNEPFCLERSGETVRGLLLHHPTLPNPYTMAVAARVTAATTVTHITAFDPDSTGQQVWQDLLQDGQLDSPTGQSTPTQKGVGIAGAVCVSSKLRPRGQCRLEFSLAWDMPRIMFGAKGQVHYRRYTRFFGQDGDAAPALSHYALCRYAEWEERISAWQSPVLDDRSLPAWYKSALFNELYFLADGGTVWLEVLEDSLPEELGRNMCHLRPTLRDYGRFGYLEGQEYRMYNTYDVHFYASFALIMLWPKLELSLQYDMALATLREDLTRRRYLMSGVMAPVKRRNVIPHDIGDPDDEPWLRVNAYLIHDTADWKDLNLKFVLQVYRDYYLTGDQNFLKDMWPVCLAVMESEMKFDKDHDGLIENGGYADQTYDGWVTTGPSAYCGGLWLAAVAVMVQMAALCGAQDIQDKFSSILSRGQEAYERLLWNGRYYNYDSSSRPQSRSVMSDQCAGQWFLKACGLGEGDTEVFPTQHVVRALQTIFELNVQAFAGGAMGAVNGMQPHGVPDKSSVQSDEVWVGVVYGLAATMIQEGLTWEGFQTAEGCYRTVWERLGLAFQTPEAYCQQRVFRSLAYMRPLSIWAMQLALQQQQHKKASWPKVKQGTGLRTGPMFGPKEAMANLSPE.

Positions 32–62 (EETGGTKDVQVTDCKSPEDSRPPKETDCCNP) are disordered. A compositionally biased stretch (basic and acidic residues) spans 46–58 (KSPEDSRPPKETD).

It belongs to the non-lysosomal glucosylceramidase family. Widely expressed. Mainly expressed in brain, heart, skeletal muscle, kidney and placenta and expressed at lower levels in liver, spleen, small intestine and lung. Detectable in colon, thymus and peripheral blood leukocytes.

The protein resides in the endoplasmic reticulum membrane. It is found in the golgi apparatus membrane. It carries out the reaction a beta-D-glucosyl-(1&lt;-&gt;1')-N-acylsphing-4-enine + H2O = an N-acylsphing-4-enine + D-glucose. It catalyses the reaction a beta-D-galactosyl-(1&lt;-&gt;1')-N-acylsphing-4-enine + H2O = an N-acylsphing-4-enine + D-galactose. The catalysed reaction is beta-D-glucosyl-(1-&gt;3)-O-lithocholate + H2O = lithocholate + D-glucose. The enzyme catalyses beta-D-glucosyl-(1-&gt;3)-O-chenodeoxycholate + H2O = chenodeoxycholate + D-glucose. It carries out the reaction a di-trans,poly-cis-dolichyl beta-D-glucosyl phosphate + chenodeoxycholate = beta-D-glucosyl-(1-&gt;3)-O-chenodeoxycholate + a di-trans,poly-cis-dolichyl phosphate + H(+). It catalyses the reaction octyl beta-D-glucose + chenodeoxycholate = beta-D-glucosyl-(1-&gt;3)-O-chenodeoxycholate + octan-1-ol. The catalysed reaction is cholesteryl 3-beta-D-glucoside + H2O = cholesterol + D-glucose. The enzyme catalyses a beta-D-glucosyl-(1&lt;-&gt;1')-N-acylsphing-4-enine + cholesterol = cholesteryl 3-beta-D-glucoside + an N-acylsphing-4-enine. It carries out the reaction beta-D-glucosyl-N-(9Z-octadecenoyl)-sphing-4E-enine + cholesterol = N-(9Z-octadecenoyl)-sphing-4-enine + cholesteryl 3-beta-D-glucoside. It catalyses the reaction a beta-D-galactosyl-(1&lt;-&gt;1')-N-acylsphing-4-enine + cholesterol = cholesteryl 3-beta-D-galactoside + an N-acylsphing-4-enine. The catalysed reaction is 1-(beta-D-galactosyl)-N-dodecanoylsphing-4-enine + cholesterol = cholesteryl 3-beta-D-galactoside + N-dodecanoylsphing-4-enine. The protein operates within lipid metabolism; sphingolipid metabolism. Its pathway is steroid metabolism; cholesterol metabolism. Inhibited by AMP-DMN/N -((5-adamantane-1-yl-methoxy)pentyl)-deoxynojirimycin. Activated by Mn(2+), Co(2+) and Mg(2+) and inhibited by Zn(2+). Enzymatic activity is dependent on membrane association and requires the presence of lipids. The membrane-associated enzyme is not inhibited by condutiriol B epoxide and bromocondutiriol B epoxide. In terms of biological role, non-lysosomal glucosylceramidase that catalyzes the hydrolysis of glucosylceramides/GlcCers (such as beta-D-glucosyl-(1&lt;-&gt;1')-N-acylsphing-4-enine) to free glucose and ceramides (such as N-acylsphing-4-enine). GlcCers are membrane glycosphingolipids that have a wide intracellular distribution. They are the main precursors of more complex glycosphingolipids that play a role in cellular growth, differentiation, adhesion, signaling, cytoskeletal dynamics and membrane properties. Involved in the transglucosylation of cholesterol, transfers glucose from GlcCer to cholesterol, thereby modifying its water solubility and biological properties. Under specific conditions, may catalyze the reverse reaction, transferring glucose from cholesteryl-3-beta-D-glucoside to ceramide (such as N-acylsphing-4-enine). May play a role in the metabolism of bile acids. Able to hydrolyze bile acid 3-O-glucosides as well as to produce bile acid-glucose conjugates thanks to a bile acid glucosyl transferase activity. Catalyzes the hydrolysis of galactosylceramides/GalCers (such as beta-D-galactosyl-(1&lt;-&gt;1')-N-acylsphing-4-enine), as well as the galactosyl transfer between GalCers and cholesterol in vitro with lower activity compared with their activity against GlcCers. The protein is Non-lysosomal glucosylceramidase of Homo sapiens (Human).